Reading from the N-terminus, the 361-residue chain is Large-conductance mechanosensitive channel MscMJLR (361 aa).

5 consecutive transmembrane segments (helical) span residues 20–40 (ILSL…NALI), 65–85 (LPVA…FLYL), 89–109 (LKTA…VVFF), 137–157 (IVVL…LLLI), and 177–197 (LAVA…LIIL).

This sequence belongs to the MscS (TC 1.A.23) family.

It localises to the cell membrane. Functionally, large-conductance mechanosensitive channel that opens in response to stretch forces in the membrane lipid bilayer. Selective for cations. Rectifies with voltage. This is Large-conductance mechanosensitive channel MscMJLR from Methanocaldococcus jannaschii (strain ATCC 43067 / DSM 2661 / JAL-1 / JCM 10045 / NBRC 100440) (Methanococcus jannaschii).